A 429-amino-acid polypeptide reads, in one-letter code: Glutamate-1-semialdehyde 2,1-aminomutase (429 aa).

An N6-(pyridoxal phosphate)lysine modification is found at lysine 265.

The protein belongs to the class-III pyridoxal-phosphate-dependent aminotransferase family. HemL subfamily. As to quaternary structure, homodimer. Pyridoxal 5'-phosphate serves as cofactor.

The protein localises to the cytoplasm. It carries out the reaction (S)-4-amino-5-oxopentanoate = 5-aminolevulinate. The protein operates within porphyrin-containing compound metabolism; protoporphyrin-IX biosynthesis; 5-aminolevulinate from L-glutamyl-tRNA(Glu): step 2/2. The polypeptide is Glutamate-1-semialdehyde 2,1-aminomutase (Ectopseudomonas mendocina (strain ymp) (Pseudomonas mendocina)).